A 114-amino-acid polypeptide reads, in one-letter code: Putative antiporter subunit mnhC2 (114 aa).

Transmembrane regions (helical) follow at residues 3-23 (LILLLVIGFLVFIGTYMILSI), 28-48 (IVIGISIYTHAGNLIIMSMGT), and 72-92 (AIVLTAIVIGFGMTAFLLVLV).

The protein belongs to the CPA3 antiporters (TC 2.A.63) subunit C family. In terms of assembly, may form a heterooligomeric complex that consists of seven subunits: mnhA2, mnhB2, mnhC2, mnhD2, mnhE2, mnhF2 and mnhG2.

The protein resides in the cell membrane. This chain is Putative antiporter subunit mnhC2 (mnhC2), found in Staphylococcus aureus (strain Mu3 / ATCC 700698).